The sequence spans 85 residues: Arminin 6494 (85 aa).

A signal peptide spans 1–18 (MKTVFAILFLAFIALTYA). Positions 19–57 (RSYEDVKEEIKNEVEKEILEDLEEESDELNDKRKEINDA) are excised as a propeptide. Ala82 carries the post-translational modification Alanine amide.

The protein belongs to the arminin family. Expressed in entodermal epithelium along the body column.

It is found in the secreted. It localises to the target cell membrane. Antimicrobial peptide with a broad-spectrum antimicrobial activity. Keeps its antibacterial activity under a wide range of salt concentrations that mimic physiological conditions of human blood, which is surprising, since Hydra is an obligate freshwater animal with nearly no salt tolerance. Does not affect red blood cells. This Hydra vulgaris (Hydra) protein is Arminin 6494.